A 145-amino-acid polypeptide reads, in one-letter code: Small ribosomal subunit protein uS12A (145 aa).

Residue Pro64 is modified to Hydroxyproline.

It belongs to the universal ribosomal protein uS12 family.

The polypeptide is Small ribosomal subunit protein uS12A (RPS23A) (Naumovozyma castellii (Yeast)).